Reading from the N-terminus, the 563-residue chain is Arginine--tRNA ligase (563 aa).

The 'HIGH' region signature appears at 120-130 (PNIAKPFHVGH).

It belongs to the class-I aminoacyl-tRNA synthetase family. In terms of assembly, monomer.

It is found in the cytoplasm. It catalyses the reaction tRNA(Arg) + L-arginine + ATP = L-arginyl-tRNA(Arg) + AMP + diphosphate. In Clostridium beijerinckii (strain ATCC 51743 / NCIMB 8052) (Clostridium acetobutylicum), this protein is Arginine--tRNA ligase.